Here is a 573-residue protein sequence, read N- to C-terminus: Isocitrate dehydrogenase kinase/phosphatase (573 aa).

ATP contacts are provided by residues 317–323 (APGVRGM) and Lys-338. Residue Asp-373 is part of the active site.

This sequence belongs to the AceK family.

It is found in the cytoplasm. It carries out the reaction L-seryl-[isocitrate dehydrogenase] + ATP = O-phospho-L-seryl-[isocitrate dehydrogenase] + ADP + H(+). In terms of biological role, bifunctional enzyme which can phosphorylate or dephosphorylate isocitrate dehydrogenase (IDH) on a specific serine residue. This is a regulatory mechanism which enables bacteria to bypass the Krebs cycle via the glyoxylate shunt in response to the source of carbon. When bacteria are grown on glucose, IDH is fully active and unphosphorylated, but when grown on acetate or ethanol, the activity of IDH declines drastically concomitant with its phosphorylation. The polypeptide is Isocitrate dehydrogenase kinase/phosphatase (Pseudomonas fluorescens (strain ATCC BAA-477 / NRRL B-23932 / Pf-5)).